Consider the following 292-residue polypeptide: 4-hydroxybenzoate octaprenyltransferase (292 aa).

The next 9 membrane-spanning stretches (helical) occupy residues 24 to 44, 47 to 67, 97 to 117, 119 to 139, 145 to 165, 171 to 191, 214 to 234, 238 to 258, and 270 to 290; these read IGTL…NAGM, LTNF…GCVI, AISL…MLSV, TILL…MKRY, VVLG…SINA, WLLF…YAMV, HIIG…GALN, LSYW…QVLI, and FLNN…SYPV.

This sequence belongs to the UbiA prenyltransferase family. Mg(2+) is required as a cofactor.

It is found in the cell inner membrane. It carries out the reaction all-trans-octaprenyl diphosphate + 4-hydroxybenzoate = 4-hydroxy-3-(all-trans-octaprenyl)benzoate + diphosphate. The protein operates within cofactor biosynthesis; ubiquinone biosynthesis. In terms of biological role, catalyzes the prenylation of para-hydroxybenzoate (PHB) with an all-trans polyprenyl group. Mediates the second step in the final reaction sequence of ubiquinone-8 (UQ-8) biosynthesis, which is the condensation of the polyisoprenoid side chain with PHB, generating the first membrane-bound Q intermediate 3-octaprenyl-4-hydroxybenzoate. In Pseudoalteromonas translucida (strain TAC 125), this protein is 4-hydroxybenzoate octaprenyltransferase.